The sequence spans 116 residues: Transcription elongation factor SPT4 homolog 2 (116 aa).

The C4-type zinc finger occupies 19 to 39 (CLRCRLVKTYDQFRDAGCENC).

This sequence belongs to the SPT4 family.

It localises to the nucleus. Its function is as follows. May regulate transcription elongation by RNA polymerase II. May enhance transcriptional pausing at sites proximal to the promoter, which may in turn facilitate the assembly of an elongation competent RNA polymerase II complex. The sequence is that of Transcription elongation factor SPT4 homolog 2 from Arabidopsis thaliana (Mouse-ear cress).